A 237-amino-acid polypeptide reads, in one-letter code: Bax inhibitor 1 (237 aa).

Over 1 to 29 (MNIFDRKINFDALLKFSHITPSTQQHLKK) the chain is Cytoplasmic. A Glycyl lysine isopeptide (Lys-Gly) (interchain with G-Cter in ubiquitin) cross-link involves residue lysine 7. The helical transmembrane segment at 30–50 (VYASFALCMFVAAAGAYVHVV) threads the bilayer. Residues 51-52 (TR) lie on the Lumenal side of the membrane. A helical transmembrane segment spans residues 53–73 (FIQAGLLSALGALALMICLMA). The Cytoplasmic segment spans residues 74–86 (TPHSHETEQKRLG). The chain crosses the membrane as a helical span at residues 87–107 (LLAGFAFLTGVGLGPALELCI). The Lumenal portion of the chain corresponds to 108-112 (AINPS). A helical transmembrane segment spans residues 113–133 (ILPTAFMGTAMIFTCFSLSAL). Residues 134-139 (YARRRS) lie on the Cytoplasmic side of the membrane. A helical transmembrane segment spans residues 140 to 160 (YLFLGGILMSAMSLMFVSSLG). Topologically, residues 161 to 166 (NLFFGS) are lumenal. The helical transmembrane segment at 167-187 (IWLFQANLYMGLLVMCGFVLF) threads the bilayer. Topologically, residues 188 to 206 (DTQLIIEKAEHGDKDYIWH) are cytoplasmic. Residues 207–227 (CIDLFLDFVTLFRKLMLILAF) constitute an intramembrane region (helical). Residues 228 to 237 (NEKDKKKEKK) are Cytoplasmic-facing.

The protein belongs to the BI1 family. In terms of assembly, interacts with BCL2 and BCL2L1. Interacts with ERN1. Ubiquitinated by BFAR, leading to proteasomal degradation. As to expression, highly abundant in adult testis.

The protein resides in the endoplasmic reticulum membrane. Endoplasmic reticulum (ER)-resident protein that confers cellular protection as an anti-apoptotic protein by limiting multiple stress-inducing pathways surrounding the endoplasmic reticulum and mitochondria. Inhibits the activities of the key sensor for the endoplasmic reticulum unfolded protein response IRE1alpha/ERN1 both directly and by blocking BAX/BAK binding. Modulates ER calcium homeostasis by acting as a calcium-leak channel. Negatively regulates autophagy and autophagosome formation, especially during periods of nutrient deprivation, and reduces cell survival during starvation. This is Bax inhibitor 1 (Tmbim6) from Rattus norvegicus (Rat).